The sequence spans 283 residues: 4-diphosphocytidyl-2-C-methyl-D-erythritol kinase (283 aa).

Lys-10 is an active-site residue. 99–109 (PMGGGLGGGSS) contacts ATP. Asp-141 is a catalytic residue.

This sequence belongs to the GHMP kinase family. IspE subfamily. In terms of assembly, homodimer.

The catalysed reaction is 4-CDP-2-C-methyl-D-erythritol + ATP = 4-CDP-2-C-methyl-D-erythritol 2-phosphate + ADP + H(+). It functions in the pathway isoprenoid biosynthesis; isopentenyl diphosphate biosynthesis via DXP pathway; isopentenyl diphosphate from 1-deoxy-D-xylulose 5-phosphate: step 3/6. Functionally, catalyzes the phosphorylation of the position 2 hydroxy group of 4-diphosphocytidyl-2C-methyl-D-erythritol. The sequence is that of 4-diphosphocytidyl-2-C-methyl-D-erythritol kinase from Escherichia coli O157:H7 (strain EC4115 / EHEC).